Consider the following 171-residue polypeptide: UPF0303 protein YPN_2129 (171 aa).

It belongs to the UPF0303 family.

This chain is UPF0303 protein YPN_2129, found in Yersinia pestis bv. Antiqua (strain Nepal516).